The primary structure comprises 122 residues: uncharacterized protein (122 aa).

Positions 79 to 114 (VIEDVASAIKEMMESAAKDLDKIEEVIKESLEKYLR) form a coiled coil.

This is an uncharacterized protein from Archaeoglobus fulgidus (strain ATCC 49558 / DSM 4304 / JCM 9628 / NBRC 100126 / VC-16).